A 1129-amino-acid polypeptide reads, in one-letter code: Tyrosine-protein kinase JAK2 (1129 aa).

Positions 35–378 (PLLQVYLYYS…GYYRLTADAH (344 aa)) constitute an FERM domain. At Tyr117 the chain carries Phosphotyrosine; by autocatalysis. Residues 399 to 480 (HGPIFMDFAI…NLKDLLTCYQ (82 aa)) form the SH2; atypical domain. Protein kinase domains are found at residues 542-806 (LIFE…NSLF) and 846-1118 (LKFL…DLAQ). 852-860 (LGKGNFGSV) serves as a coordination point for ATP. Phosphotyrosine; by autocatalysis is present on Tyr865. Lys879 is a binding site for ATP. 2 positions are modified to phosphotyrosine; by autocatalysis: Tyr963 and Tyr969. The active-site Proton acceptor is the Asp973. Residues Tyr1004 and Tyr1005 each carry the phosphotyrosine; by autocatalysis modification.

Belongs to the protein kinase superfamily. Tyr protein kinase family. JAK subfamily. Autophosphorylated, leading to regulate its activity.

The protein localises to the endomembrane system. It localises to the nucleus. It catalyses the reaction L-tyrosyl-[protein] + ATP = O-phospho-L-tyrosyl-[protein] + ADP + H(+). Regulated by autophosphorylation, can both activate or decrease activity. Heme regulates its activity by enhancing the phosphorylation on Tyr-1004 and Tyr-1005. Functionally, non-receptor tyrosine kinase involved in various processes such as cell growth, development, differentiation or histone modifications. Mediates essential signaling events in both innate and adaptive immunity. In the cytoplasm, plays a pivotal role in signal transduction via its association with cytokine receptors. Following ligand-binding to cell surface receptors, phosphorylates specific tyrosine residues on the cytoplasmic tails of the receptor, creating docking sites for STATs proteins. Subsequently, phosphorylates the STATs proteins once they are recruited to the receptor. Phosphorylated STATs then form homodimer or heterodimers and translocate to the nucleus to activate gene transcription. For example, cell stimulation with erythropoietin (EPO) during erythropoiesis leads to JAK2 autophosphorylation, activation, and its association with erythropoietin receptor (EPOR) that becomes phosphorylated in its cytoplasmic domain. Then, STAT5 (STAT5A or STAT5B) is recruited, phosphorylated and activated by JAK2. Once activated, dimerized STAT5 translocates into the nucleus and promotes the transcription of several essential genes involved in the modulation of erythropoiesis. Part of a signaling cascade that is activated by increased cellular retinol and that leads to the activation of STAT5 (STAT5A or STAT5B). In the nucleus, plays a key role in chromatin by specifically mediating phosphorylation of 'Tyr-41' of histone H3 (H3Y41ph), a specific tag that promotes exclusion of CBX5 (HP1 alpha) from chromatin. Up-regulates the potassium voltage-gated channel activity of KCNA3. This Gallus gallus (Chicken) protein is Tyrosine-protein kinase JAK2.